Consider the following 790-residue polypeptide: Nuclear cap-binding protein subunit 1 (790 aa).

The segment at 1 to 26 is disordered; sequence MSRRRHSYENDGGQPHKRRKTSDANE. A Nuclear localization signal motif is present at residues 3-20; the sequence is RRRHSYENDGGQPHKRRK. Ser7 carries the post-translational modification Phosphoserine. Thr21 is modified (phosphothreonine). Residues Ser22 and Ser201 each carry the phosphoserine modification. The 213-residue stretch at 28–240 folds into the MIF4G domain; sequence EDHLESLICK…CLWAQIQKLK (213 aa). Lys204 carries the post-translational modification N6-acetyllysine. Residues 643–713 are a coiled coil; sequence STIRKMNKHV…SEQKNLFLVI (71 aa). Positions 666-685 are disordered; it reads LARQHKRRSDDDDRSSDRKD. Residue Lys684 forms a Glycyl lysine isopeptide (Lys-Gly) (interchain with G-Cter in SUMO2) linkage. Lys698 carries the N6-acetyllysine modification.

It belongs to the NCBP1 family. As to quaternary structure, component of the nuclear cap-binding complex (CBC), a heterodimer composed of NCBP1/CBP80 and NCBP2/CBP20 that interacts with m7GpppG-capped RNA. Found in a U snRNA export complex containing PHAX/RNUXA, NCBP1/CBP80, NCBP2/CBP20, RAN, XPO1 and m7G-capped RNA. Identified in a IGF2BP1-dependent mRNP granule complex containing untranslated mRNAs. Interacts with PHAX/RNUXA, SRRT/ARS2, EIF4G2, IGF2BP1, HNRNPF, HNRNPH1, KIAA0427/CTIF, PARN, DROSHA, UPF1 and ALYREF/THOC4. May interact with EIF4G1; the interaction is however controversial. The large PER complex involved in the repression of transcriptional termination is composed of at least PER2, CDK9, DDX5, DHX9, NCBP1/CBP80 and POLR2A (active). Component of an alternative nuclear cap-binding complex (CBC) composed of NCBP1/CBP80 and NCBP3. Interacts with METTL3. Interacts with ZFC3H1 in a RNase-insensitive manner. Interacts with MTREX. Interacts with TASOR. Interacts with DHX34; the interaction is RNA-dependent. Interacts with KPNA3. Post-translationally, dephosphorylated at Thr-21 by the PNUTS-PP1 complex during RNA polymerase II transcription pause-release. In terms of tissue distribution, expressed in the spermatogonia, spermatocytes and granular cells within the cerebellum.

Its subcellular location is the nucleus. It localises to the cytoplasm. Its function is as follows. Component of the cap-binding complex (CBC), which binds cotranscriptionally to the 5'-cap of pre-mRNAs and is involved in various processes such as pre-mRNA splicing, translation regulation, nonsense-mediated mRNA decay, RNA-mediated gene silencing (RNAi) by microRNAs (miRNAs) and mRNA export. The CBC complex is involved in mRNA export from the nucleus via its interaction with ALYREF/THOC4/ALY, leading to the recruitment of the mRNA export machinery to the 5'-end of mRNA and to mRNA export in a 5' to 3' direction through the nuclear pore. The CBC complex is also involved in mediating U snRNA and intronless mRNAs export from the nucleus. The CBC complex is essential for a pioneer round of mRNA translation, before steady state translation when the CBC complex is replaced by cytoplasmic cap-binding protein eIF4E. The pioneer round of mRNA translation mediated by the CBC complex plays a central role in nonsense-mediated mRNA decay (NMD), NMD only taking place in mRNAs bound to the CBC complex, but not on eIF4E-bound mRNAs. The CBC complex enhances NMD in mRNAs containing at least one exon-junction complex (EJC) via its interaction with UPF1, promoting the interaction between UPF1 and UPF2. The CBC complex is also involved in 'failsafe' NMD, which is independent of the EJC complex, while it does not participate in Staufen-mediated mRNA decay (SMD). During cell proliferation, the CBC complex is also involved in microRNAs (miRNAs) biogenesis via its interaction with SRRT/ARS2 and is required for miRNA-mediated RNA interference. The CBC complex also acts as a negative regulator of PARN, thereby acting as an inhibitor of mRNA deadenylation. In the CBC complex, NCBP1/CBP80 does not bind directly capped RNAs (m7GpppG-capped RNA) but is required to stabilize the movement of the N-terminal loop of NCBP2/CBP20 and lock the CBC into a high affinity cap-binding state with the cap structure. Associates with NCBP3 to form an alternative cap-binding complex (CBC) which plays a key role in mRNA export and is particularly important in cellular stress situations such as virus infections. The conventional CBC with NCBP2 binds both small nuclear RNA (snRNA) and messenger (mRNA) and is involved in their export from the nucleus whereas the alternative CBC with NCBP3 does not bind snRNA and associates only with mRNA thereby playing a role only in mRNA export. NCBP1/CBP80 is required for cell growth and viability. In Mus musculus (Mouse), this protein is Nuclear cap-binding protein subunit 1 (Ncbp1).